Consider the following 635-residue polypeptide: tRNA uridine 5-carboxymethylaminomethyl modification enzyme MnmG (635 aa).

15 to 20 (GAGHAG) is a binding site for FAD. 276–290 (GPRYCPSIEDKIVRF) contributes to the NAD(+) binding site.

The protein belongs to the MnmG family. As to quaternary structure, homodimer. Heterotetramer of two MnmE and two MnmG subunits. The cofactor is FAD.

Its subcellular location is the cytoplasm. Its function is as follows. NAD-binding protein involved in the addition of a carboxymethylaminomethyl (cmnm) group at the wobble position (U34) of certain tRNAs, forming tRNA-cmnm(5)s(2)U34. This is tRNA uridine 5-carboxymethylaminomethyl modification enzyme MnmG from Streptococcus sanguinis (strain SK36).